Reading from the N-terminus, the 61-residue chain is Phospholipase A2 (61 aa).

Ca(2+)-binding residues include Tyr27, Gly29, and Gly31. The cysteines at positions 28 and 35 are disulfide-linked. His38 is an active-site residue. Ca(2+) is bound at residue Asp39. Cys41 and Cys59 are disulfide-bonded. Residue Asp60 is part of the active site.

Belongs to the phospholipase A2 family. Group II subfamily. D49 sub-subfamily. In terms of assembly, homodimer. The cofactor is Ca(2+). As to expression, expressed by the venom gland.

It localises to the secreted. It catalyses the reaction a 1,2-diacyl-sn-glycero-3-phosphocholine + H2O = a 1-acyl-sn-glycero-3-phosphocholine + a fatty acid + H(+). Its function is as follows. Snake venom phospholipase A2 (PLA2) that displays edema-inducing activities. PLA2 catalyzes the calcium-dependent hydrolysis of the 2-acyl groups in 3-sn-phosphoglycerides. The chain is Phospholipase A2 from Crotalus atrox (Western diamondback rattlesnake).